The following is a 163-amino-acid chain: Probable chemoreceptor glutamine deamidase CheD (163 aa).

This sequence belongs to the CheD family.

It carries out the reaction L-glutaminyl-[protein] + H2O = L-glutamyl-[protein] + NH4(+). In terms of biological role, probably deamidates glutamine residues to glutamate on methyl-accepting chemotaxis receptors (MCPs), playing an important role in chemotaxis. This chain is Probable chemoreceptor glutamine deamidase CheD, found in Borrelia garinii subsp. bavariensis (strain ATCC BAA-2496 / DSM 23469 / PBi) (Borreliella bavariensis).